The chain runs to 102 residues: NADH-quinone oxidoreductase subunit K (102 aa).

A run of 3 helical transmembrane segments spans residues 5-25 (LSHYLTVSAILFTLGVFGIFL), 31-51 (IVILMSIELILLAVNINMVAF), and 65-85 (LFILTVAAAEAAIGLAILVVF).

Belongs to the complex I subunit 4L family. As to quaternary structure, NDH-1 is composed of 14 different subunits. Subunits NuoA, H, J, K, L, M, N constitute the membrane sector of the complex.

The protein resides in the cell inner membrane. It carries out the reaction a quinone + NADH + 5 H(+)(in) = a quinol + NAD(+) + 4 H(+)(out). Its function is as follows. NDH-1 shuttles electrons from NADH, via FMN and iron-sulfur (Fe-S) centers, to quinones in the respiratory chain. The immediate electron acceptor for the enzyme in this species is believed to be ubiquinone. Couples the redox reaction to proton translocation (for every two electrons transferred, four hydrogen ions are translocated across the cytoplasmic membrane), and thus conserves the redox energy in a proton gradient. In Rhizobium johnstonii (strain DSM 114642 / LMG 32736 / 3841) (Rhizobium leguminosarum bv. viciae), this protein is NADH-quinone oxidoreductase subunit K.